We begin with the raw amino-acid sequence, 58 residues long: Galectin-1 (58 aa).

The region spanning 2–58 (GITXTSLHVAPGARLAVKGDIPAGAKSWVINLGKGENDIMLHFNARFDAHGDIRTIV) is the Galectin domain. A beta-D-galactoside contacts are provided by residues 43–47 (HFNAR) and histidine 51.

As to quaternary structure, monomer. Detected in most tissues, most abundantly in skin.

The protein localises to the secreted. It localises to the extracellular space. Its subcellular location is the extracellular matrix. Functionally, may regulate cell apoptosis and cell differentiation. Binds beta-galactoside and a wide array of complex carbohydrates. This is Galectin-1 from Podarcis hispanicus (Iberian wall lizard).